A 376-amino-acid chain; its full sequence is dTDP-4-amino-4,6-dideoxygalactose transaminase (376 aa).

Lys181 bears the N6-(pyridoxal phosphate)lysine mark.

This sequence belongs to the DegT/DnrJ/EryC1 family. Homotetramer. Pyridoxal 5'-phosphate serves as cofactor.

It catalyses the reaction dTDP-4-amino-4,6-dideoxy-alpha-D-galactose + 2-oxoglutarate = dTDP-4-dehydro-6-deoxy-alpha-D-glucose + L-glutamate. It participates in bacterial outer membrane biogenesis; enterobacterial common antigen biosynthesis. In terms of biological role, catalyzes the synthesis of dTDP-4-amino-4,6-dideoxy-D-galactose (dTDP-Fuc4N) from dTDP-4-keto-6-deoxy-D-glucose (dTDP-D-Glc4O) and L-glutamate. The protein is dTDP-4-amino-4,6-dideoxygalactose transaminase of Escherichia coli (strain K12).